Here is a 155-residue protein sequence, read N- to C-terminus: MEQGSLAKKVSQFVEPTIESMGLTLWGVEVTSANRPAVIIYIDSENGVSIDQCAEVSRDVGLMLEVEEVIDSAYVLEVSSPGLERKFFKPEQMSAYVGKKIDIALVFSLEGRKKFKGLLQETDEEGLLLKLEDQEDPIKIEWDRIKKAKLIHEFK.

The protein belongs to the RimP family.

Its subcellular location is the cytoplasm. In terms of biological role, required for maturation of 30S ribosomal subunits. This Maridesulfovibrio salexigens (strain ATCC 14822 / DSM 2638 / NCIMB 8403 / VKM B-1763) (Desulfovibrio salexigens) protein is Ribosome maturation factor RimP.